Here is a 252-residue protein sequence, read N- to C-terminus: Triosephosphate isomerase (252 aa).

10-12 (NWK) is a binding site for substrate. His96 acts as the Electrophile in catalysis. The Proton acceptor role is filled by Glu168. Substrate-binding positions include Gly174, Ser214, and 235 to 236 (GG).

It belongs to the triosephosphate isomerase family. Homodimer.

It localises to the cytoplasm. The catalysed reaction is D-glyceraldehyde 3-phosphate = dihydroxyacetone phosphate. It participates in carbohydrate biosynthesis; gluconeogenesis. Its pathway is carbohydrate degradation; glycolysis; D-glyceraldehyde 3-phosphate from glycerone phosphate: step 1/1. Its function is as follows. Involved in the gluconeogenesis. Catalyzes stereospecifically the conversion of dihydroxyacetone phosphate (DHAP) to D-glyceraldehyde-3-phosphate (G3P). In Streptococcus pyogenes serotype M5 (strain Manfredo), this protein is Triosephosphate isomerase.